The primary structure comprises 299 residues: 4-diphosphocytidyl-2-C-methyl-D-erythritol kinase (299 aa).

Lysine 18 is an active-site residue. Proline 104–serine 114 lines the ATP pocket. Aspartate 146 is an active-site residue.

Belongs to the GHMP kinase family. IspE subfamily.

It catalyses the reaction 4-CDP-2-C-methyl-D-erythritol + ATP = 4-CDP-2-C-methyl-D-erythritol 2-phosphate + ADP + H(+). It functions in the pathway isoprenoid biosynthesis; isopentenyl diphosphate biosynthesis via DXP pathway; isopentenyl diphosphate from 1-deoxy-D-xylulose 5-phosphate: step 3/6. In terms of biological role, catalyzes the phosphorylation of the position 2 hydroxy group of 4-diphosphocytidyl-2C-methyl-D-erythritol. This Brucella melitensis biotype 1 (strain ATCC 23456 / CCUG 17765 / NCTC 10094 / 16M) protein is 4-diphosphocytidyl-2-C-methyl-D-erythritol kinase.